The primary structure comprises 467 residues: tRNA-2-methylthio-N(6)-dimethylallyladenosine synthase (467 aa).

The disordered stretch occupies residues 1–20; that stretch reads MSDDTTQIEPAMAQETSPRA. Residues 23–143 form the MTTase N-terminal domain; it reads RKVFVKTYGC…LPNALARVRG (121 aa). Cys-32, Cys-68, Cys-106, Cys-184, Cys-188, and Cys-191 together coordinate [4Fe-4S] cluster. The 233-residue stretch at 170–402 folds into the Radical SAM core domain; sequence RKRGVSAFLT…QALLSAQQYA (233 aa). Residues 405 to 467 form the TRAM domain; sequence DSMIGRKMDV…TNSLIAQKLA (63 aa).

Belongs to the methylthiotransferase family. MiaB subfamily. As to quaternary structure, monomer. [4Fe-4S] cluster is required as a cofactor.

It is found in the cytoplasm. The catalysed reaction is N(6)-dimethylallyladenosine(37) in tRNA + (sulfur carrier)-SH + AH2 + 2 S-adenosyl-L-methionine = 2-methylsulfanyl-N(6)-dimethylallyladenosine(37) in tRNA + (sulfur carrier)-H + 5'-deoxyadenosine + L-methionine + A + S-adenosyl-L-homocysteine + 2 H(+). Catalyzes the methylthiolation of N6-(dimethylallyl)adenosine (i(6)A), leading to the formation of 2-methylthio-N6-(dimethylallyl)adenosine (ms(2)i(6)A) at position 37 in tRNAs that read codons beginning with uridine. The sequence is that of tRNA-2-methylthio-N(6)-dimethylallyladenosine synthase from Brucella suis (strain ATCC 23445 / NCTC 10510).